The sequence spans 152 residues: Lipoprotein signal peptidase (152 aa).

3 helical membrane-spanning segments follow: residues 5–25 (LFVL…FWIV), 61–81 (WFFV…LATH), and 84–104 (LNIW…GNFI). Residues Asp114 and Asp130 contribute to the active site. Residues 125 to 145 (IFNVADSYLTVGVILLVICLW) traverse the membrane as a helical segment.

This sequence belongs to the peptidase A8 family.

The protein resides in the cell membrane. It carries out the reaction Release of signal peptides from bacterial membrane prolipoproteins. Hydrolyzes -Xaa-Yaa-Zaa-|-(S,diacylglyceryl)Cys-, in which Xaa is hydrophobic (preferably Leu), and Yaa (Ala or Ser) and Zaa (Gly or Ala) have small, neutral side chains.. The protein operates within protein modification; lipoprotein biosynthesis (signal peptide cleavage). Its function is as follows. This protein specifically catalyzes the removal of signal peptides from prolipoproteins. This is Lipoprotein signal peptidase from Streptococcus pyogenes serotype M6 (strain ATCC BAA-946 / MGAS10394).